We begin with the raw amino-acid sequence, 319 residues long: Pectinesterase (319 aa).

Pyrrolidone carboxylic acid is present on Gln-1. Residues Thr-83 and Gln-113 each coordinate substrate. Asp-136 acts as the Proton donor in catalysis. Cys-150 and Cys-170 form a disulfide bridge. Catalysis depends on Asp-157, which acts as the Nucleophile. The substrate site is built by Arg-225 and Trp-227.

Belongs to the pectinesterase family.

It is found in the secreted. It localises to the cell wall. The enzyme catalyses [(1-&gt;4)-alpha-D-galacturonosyl methyl ester](n) + n H2O = [(1-&gt;4)-alpha-D-galacturonosyl](n) + n methanol + n H(+). It functions in the pathway glycan metabolism; pectin degradation; 2-dehydro-3-deoxy-D-gluconate from pectin: step 1/5. Its function is as follows. Catalyzes the deesterification of methyl-esterified D-galactosiduronic acid units in pectic compounds. It participates in modulating cell wall during fruit ripening, cell wall extension during pollen germination, and in defense mechanisms against pathogens. This is Pectinesterase from Daucus carota (Wild carrot).